Consider the following 647-residue polypeptide: Zinc finger CCCH domain-containing protein 19 (647 aa).

C3H1-type zinc fingers lie at residues 16 to 45 (RRRS…HSDA) and 47 to 73 (RMNP…HPPL). Positions 78–106 (GAPTTPRTSQQSAPQVSVPAQAPVPNPAS) are disordered. A compositionally biased stretch (low complexity) spans 86–106 (SQQSAPQVSVPAQAPVPNPAS). Residues 109–136 (AKQGVPCYYFQKGMCVKGDRCAFLHLPQ) form a C3H1-type 3 zinc finger. Disordered stretches follow at residues 155–280 (VPHP…RTNG), 308–327 (LSES…DSSD), 335–452 (QRRL…DAES), 512–580 (LKRK…LSPA), and 586–605 (EAAD…ETAE). 2 stretches are compositionally biased toward polar residues: residues 160-175 (LKNS…QQNA) and 189-203 (NGKT…NRAG). Positions 267–280 (SLREDRGAYRRTNG) are enriched in basic and acidic residues. Positions 347–359 (SDRHNVYPEDERH) are enriched in basic and acidic residues. Residues 369–379 (QASNDGVSSSR) show a composition bias toward polar residues. Basic and acidic residues predominate over residues 419–433 (LRGKLHDRLKAKPNE). A compositionally biased stretch (polar residues) spans 435-445 (VSGNVQSSLSK). A compositionally biased stretch (basic and acidic residues) spans 527–536 (GSKREEHSGG).

The polypeptide is Zinc finger CCCH domain-containing protein 19 (Oryza sativa subsp. japonica (Rice)).